A 151-amino-acid polypeptide reads, in one-letter code: Deoxyuridine 5'-triphosphate nucleotidohydrolase (151 aa).

Arg28 contacts Mg(2+). Residues Pro72–Ser74, Gly86–Asp89, Tyr92, Gly97, Ile99, and Arg115 each bind dUTP.

Belongs to the dUTPase family. Mg(2+) serves as cofactor.

It carries out the reaction dUTP + H2O = dUMP + diphosphate + H(+). In terms of biological role, this enzyme is involved in nucleotide metabolism: it produces dUMP, the immediate precursor of thymidine nucleotides and it decreases the intracellular concentration of dUTP so that uracil cannot be incorporated into DNA. The polypeptide is Deoxyuridine 5'-triphosphate nucleotidohydrolase (OPG046) (Monkeypox virus).